We begin with the raw amino-acid sequence, 563 residues long: Inclusion membrane protein M (563 aa).

Residues 1-36 (MVYFRAHQPRHTPKTFPLEVHHSFSDKHPQIAKAMR) are Cytoplasmic-facing. A helical transmembrane segment spans residues 37 to 57 (ITGIALAALSLLAVVACVIAV). Residue Ser-58 is a topological domain, vacuolar. A helical membrane pass occupies residues 59-79 (AGGAAIPLAVISGIAVMSGLL). Over 80–252 (SAATIICSAK…VLKVALSLGV (173 aa)) the chain is Cytoplasmic. The helical transmembrane segment at 253-273 (LAGVAALIIFLPPSLPFIAVI) threads the bilayer. Gly-274 is a topological domain (vacuolar). Residues 275-295 (VSSLALGMASFLMIRGIKYLL) form a helical membrane-spanning segment. The Cytoplasmic segment spans residues 296–563 (EHSPLNRKQL…QLAQYLLDNH (268 aa)).

This sequence belongs to the chlamydial CPn_0065/CT_288/TC_0561 family. Interacts with host CCDC146. In host cells infected with C.trachomatis incM, CCDC146 is recruited to the periphery of the pathogen-containing vacuole but recruitment is not dependent on incM.

It is found in the host vacuole. Its subcellular location is the host pathogen-containing vacuole. It localises to the host pathogen-containing vacuole membrane. The protein localises to the host pathogen-containing vacuole lumen. The protein resides in the secreted. In terms of biological role, interferes with host cell cytokinesis, centrosome positioning and Golgi distribution, and contributes to the morphology and stability of the pathogen-containing vacuole. May exert its effects by acting directly or indirectly on host microtubules. In Chlamydia trachomatis serovar D (strain ATCC VR-885 / DSM 19411 / UW-3/Cx), this protein is Inclusion membrane protein M.